A 98-amino-acid polypeptide reads, in one-letter code: NADH-ubiquinone oxidoreductase chain 4L (98 aa).

A run of 3 helical transmembrane segments spans residues 1 to 21, 29 to 49, and 61 to 81; these read MSIT…GMFT, SLLC…IVSL, and VILL…LVMV.

The protein belongs to the complex I subunit 4L family. Core subunit of respiratory chain NADH dehydrogenase (Complex I) which is composed of 45 different subunits.

It localises to the mitochondrion inner membrane. It catalyses the reaction a ubiquinone + NADH + 5 H(+)(in) = a ubiquinol + NAD(+) + 4 H(+)(out). In terms of biological role, core subunit of the mitochondrial membrane respiratory chain NADH dehydrogenase (Complex I) which catalyzes electron transfer from NADH through the respiratory chain, using ubiquinone as an electron acceptor. Part of the enzyme membrane arm which is embedded in the lipid bilayer and involved in proton translocation. The polypeptide is NADH-ubiquinone oxidoreductase chain 4L (MT-ND4L) (Ochotona collaris (Collared pika)).